We begin with the raw amino-acid sequence, 110 residues long: Glutaredoxin-1 (110 aa).

A Glutaredoxin domain is found at 7 to 110; the sequence is IKHVKDLIAE…EELLEPILAN (104 aa). Lysine 11 participates in a covalent cross-link: Glycyl lysine isopeptide (Lys-Gly) (interchain with G-Cter in ubiquitin). Glutathione is bound by residues 24–29, glutamine 63, valine 75, and 88–89; these read KTYCPY and ND. Cysteine 27 carries the post-translational modification S-glutathionyl cysteine; alternate. An intrachain disulfide couples cysteine 27 to cysteine 30.

Belongs to the glutaredoxin family.

It localises to the cytoplasm. The protein resides in the nucleus. The catalysed reaction is 2 glutathione + H2O2 = glutathione disulfide + 2 H2O. It carries out the reaction 1-chloro-2,4-dinitrobenzene + glutathione = 2,4-dinitrophenyl-S-glutathione + chloride + H(+). The enzyme catalyses RX + glutathione = an S-substituted glutathione + a halide anion + H(+). Its function is as follows. Component of the glutathione system which performs several activities such as glutathione-dependent oxidoreductase, glutathione peroxidase and glutathione S-transferase (GST) activity. The disulfide bond functions as an electron carrier in the glutathione-dependent synthesis of deoxyribonucleotides by the enzyme ribonucleotide reductase. In addition, it is also involved in reducing cytosolic protein- and non-protein-disulfides in a coupled system with glutathione reductase. Required for resistance to reactive oxygen species (ROS) by directly reducing hydroperoxides and for the detoxification of ROS-mediated damage. GRX1 is less active as an oxidoreductase than GRX2. This chain is Glutaredoxin-1 (GRX1), found in Saccharomyces cerevisiae (strain ATCC 204508 / S288c) (Baker's yeast).